We begin with the raw amino-acid sequence, 314 residues long: Oxidoreductase NAD-binding domain-containing protein 1 (314 aa).

The N-terminal stretch at 1 to 18 is a signal peptide; sequence MALVAGSAAYQVLRGVTG. The FAD-binding FR-type domain maps to 63–166; the sequence is EIISPAKVCE…VGGEFCFDPQ (104 aa). 180-185 lines the NAD(+) pocket; the sequence is GVGINP.

The protein is Oxidoreductase NAD-binding domain-containing protein 1 (oxnad1) of Xenopus tropicalis (Western clawed frog).